A 218-amino-acid polypeptide reads, in one-letter code: MKIVIADDHAVVRTGFSMILNYQEDMEVVATAADGVEAYQKVLEHRPDVLILDLSMPPGESGLIATSKISESFPETKILILTMFDDEEYLFHMLKSGAKGYILKNSPDEQLILAVRTVYQGETYVDMKLTTSLVNEFVNQSQTDEVSSSSDPFKILSKRELEILPLIAKGYGNKDIAEKLFVSVKTVEAHKTHIMTKLNLKSKPELVEYALKKKLLEF.

The region spanning 2–119 is the Response regulatory domain; it reads KIVIADDHAV…QLILAVRTVY (118 aa). Asp53 carries the 4-aspartylphosphate modification. An HTH luxR-type domain is found at 149–214; it reads SSDPFKILSK…ELVEYALKKK (66 aa). Positions 173–192 form a DNA-binding region, H-T-H motif; the sequence is NKDIAEKLFVSVKTVEAHKT.

Phosphorylated by NreB.

Its subcellular location is the cytoplasm. Functionally, member of the two-component regulatory system NreB/NreC involved in the control of dissimilatory nitrate/nitrite reduction in response to oxygen. Phosphorylated NreC binds to a GC-rich palindromic sequence at the promoters of the nitrate (narGHJI) and nitrite (nir) reductase operons, as well as the putative nitrate transporter gene narT, and activates their expression. The sequence is that of Oxygen regulatory protein NreC (nreC) from Staphylococcus epidermidis (strain ATCC 12228 / FDA PCI 1200).